A 457-amino-acid polypeptide reads, in one-letter code: Protein N-terminal amidase (457 aa).

A CN hydrolase domain is found at Leu-19–Phe-453. Glu-63 serves as the catalytic Proton acceptor. The active-site Proton donor is Lys-136. Cys-187 (nucleophile) is an active-site residue.

It belongs to the carbon-nitrogen hydrolase superfamily.

Functionally, deamidates N-terminal Asn and Gln. Component of a targeting complex in the N-end rule pathway. This chain is Protein N-terminal amidase (NTA1), found in Saccharomyces cerevisiae (strain ATCC 204508 / S288c) (Baker's yeast).